Consider the following 310-residue polypeptide: Glutaminase (310 aa).

Residues serine 66, asparagine 117, glutamate 161, asparagine 168, tyrosine 192, tyrosine 244, and valine 262 each contribute to the substrate site.

Belongs to the glutaminase family. Homotetramer.

The catalysed reaction is L-glutamine + H2O = L-glutamate + NH4(+). In Desulfovibrio desulfuricans (strain ATCC 27774 / DSM 6949 / MB), this protein is Glutaminase.